A 515-amino-acid chain; its full sequence is Alpha-1B adrenergic receptor (515 aa).

Over 1 to 45 (MNPDLDTGHNTSAPAQWGELKDANFTGPNQTSSNSTLPQLDVTRA) the chain is Extracellular. Asn-10, Asn-24, and Asn-34 each carry an N-linked (GlcNAc...) asparagine glycan. A helical membrane pass occupies residues 46–70 (ISVGLVLGAFILFAIVGNILVILSV). Over 71 to 83 (ACNRHLRTPTNYF) the chain is Cytoplasmic. Residues 84–105 (IVNLAIADLLLSFTVLPFSATL) traverse the membrane as a helical segment. The Extracellular segment spans residues 106-115 (EVLGYWVLGR). The helical transmembrane segment at 116–141 (IFCDIWAAVDVLCCTASILSLCAISI) threads the bilayer. Cys-118 and Cys-195 are disulfide-bonded. Topologically, residues 142–161 (DRYIGVRYSLQYPTLVTRRK) are cytoplasmic. The chain crosses the membrane as a helical span at residues 162–184 (AILALLSVWVLSTVISIGPLLGW). Residues 185 to 201 (KEPAPNDDKECGVTEEP) are Extracellular-facing. A helical membrane pass occupies residues 202–224 (FYALFSSLGSFYIPLAVILVMYC). At 225-295 (RVYIVAKRTT…FSREKKAAKT (71 aa)) the chain is on the cytoplasmic side. At Thr-264 the chain carries Phosphothreonine. Residues 296-319 (LGIVVGMFILCWLPFFIALPLGSL) form a helical membrane-spanning segment. Residues 320–326 (FSTLKPP) lie on the Extracellular side of the membrane. A helical membrane pass occupies residues 327-351 (DAVFKVVFWLGYFNSCLNPIIYPCS). At 352-515 (SKEFKRAFMR…SNMPLAPGHF (164 aa)) the chain is on the cytoplasmic side. The S-palmitoyl cysteine moiety is linked to residue Cys-365. A Nuclear localization signal motif is present at residues 368 to 378 (RSGRRRRRRRR). Disordered regions lie at residues 392-428 (GGSLERSQSRKDSLDDSGSCMSGSQRTLPSASPSPGY) and 473-515 (LLGE…PGHF). Residues 410–424 (SCMSGSQRTLPSASP) show a composition bias toward polar residues.

Belongs to the G-protein coupled receptor 1 family. Adrenergic receptor subfamily. ADRA1B sub-subfamily. As to quaternary structure, homo- and heterooligomer. Heterooligomerizes with ADRA1B homooligomers in cardiac myocytes. Interacts with CAVIN4.

It localises to the nucleus membrane. The protein resides in the cell membrane. Its subcellular location is the cytoplasm. The protein localises to the membrane. It is found in the caveola. In terms of biological role, this alpha-adrenergic receptor mediates its action by association with G proteins that activate a phosphatidylinositol-calcium second messenger system. Its effect is mediated by G(q) and G(11) proteins. Nuclear ADRA1A-ADRA1B heterooligomers regulate phenylephrine (PE)-stimulated ERK signaling in cardiac myocytes. In Mesocricetus auratus (Golden hamster), this protein is Alpha-1B adrenergic receptor (ADRA1B).